We begin with the raw amino-acid sequence, 38 residues long: Large ribosomal subunit protein bL36 (38 aa).

It belongs to the bacterial ribosomal protein bL36 family.

The chain is Large ribosomal subunit protein bL36 from Roseiflexus castenholzii (strain DSM 13941 / HLO8).